A 188-amino-acid chain; its full sequence is Methylamine dehydrogenase light chain (188 aa).

The tat-type signal signal peptide spans Met-1–Ala-57. 6 cysteine pairs are disulfide-bonded: Cys-80–Cys-145, Cys-86–Cys-118, Cys-93–Cys-178, Cys-95–Cys-143, Cys-103–Cys-134, and Cys-135–Cys-166. Tryptophylquinone is present on Trp-114. A cross-link (tryptophan tryptophylquinone (Trp-Trp)) is located at residues Trp-114–Trp-165.

The protein belongs to the aromatic amine dehydrogenase light chain family. Heterotetramer of two light and two heavy chains. Requires tryptophan tryptophylquinone residue as cofactor. In terms of processing, predicted to be exported by the Tat system. The position of the signal peptide cleavage has not been experimentally proven. Post-translationally, tryptophan tryptophylquinone (TTQ) is formed by oxidation of the indole ring of a tryptophan to form tryptophylquinone followed by covalent cross-linking with another tryptophan residue.

Its subcellular location is the periplasm. It catalyses the reaction 2 oxidized [amicyanin] + methylamine + H2O = 2 reduced [amicyanin] + formaldehyde + NH4(+) + 2 H(+). The protein operates within one-carbon metabolism; methylamine degradation; formaldehyde from methylamine: step 1/1. Its function is as follows. Methylamine dehydrogenase carries out the oxidation of methylamine. Electrons are passed from methylamine dehydrogenase to amicyanin. This Paracoccus denitrificans protein is Methylamine dehydrogenase light chain (mauA).